The primary structure comprises 138 residues: Phosphoribosyl-AMP cyclohydrolase (138 aa).

D84 provides a ligand contact to Mg(2+). C85 contacts Zn(2+). 2 residues coordinate Mg(2+): D86 and D88. Residues C102 and C109 each coordinate Zn(2+).

The protein belongs to the PRA-CH family. Homodimer. Mg(2+) is required as a cofactor. Requires Zn(2+) as cofactor.

The protein resides in the cytoplasm. It catalyses the reaction 1-(5-phospho-beta-D-ribosyl)-5'-AMP + H2O = 1-(5-phospho-beta-D-ribosyl)-5-[(5-phospho-beta-D-ribosylamino)methylideneamino]imidazole-4-carboxamide. It functions in the pathway amino-acid biosynthesis; L-histidine biosynthesis; L-histidine from 5-phospho-alpha-D-ribose 1-diphosphate: step 3/9. Its function is as follows. Catalyzes the hydrolysis of the adenine ring of phosphoribosyl-AMP. The sequence is that of Phosphoribosyl-AMP cyclohydrolase from Burkholderia pseudomallei (strain K96243).